A 315-amino-acid polypeptide reads, in one-letter code: Methionyl-tRNA formyltransferase (315 aa).

Residue 113–116 (SLLP) coordinates (6S)-5,6,7,8-tetrahydrofolate.

The protein belongs to the Fmt family.

It catalyses the reaction L-methionyl-tRNA(fMet) + (6R)-10-formyltetrahydrofolate = N-formyl-L-methionyl-tRNA(fMet) + (6S)-5,6,7,8-tetrahydrofolate + H(+). Its function is as follows. Attaches a formyl group to the free amino group of methionyl-tRNA(fMet). The formyl group appears to play a dual role in the initiator identity of N-formylmethionyl-tRNA by promoting its recognition by IF2 and preventing the misappropriation of this tRNA by the elongation apparatus. In Salmonella gallinarum (strain 287/91 / NCTC 13346), this protein is Methionyl-tRNA formyltransferase.